We begin with the raw amino-acid sequence, 382 residues long: D-galactonate dehydratase (382 aa).

Residue Asp183 coordinates Mg(2+). The active-site Proton donor is His185. Residues Glu209 and Glu235 each coordinate Mg(2+). His285 (proton acceptor) is an active-site residue.

The protein belongs to the mandelate racemase/muconate lactonizing enzyme family. GalD subfamily. Requires Mg(2+) as cofactor.

It carries out the reaction D-galactonate = 2-dehydro-3-deoxy-D-galactonate + H2O. Its pathway is carbohydrate acid metabolism; D-galactonate degradation; D-glyceraldehyde 3-phosphate and pyruvate from D-galactonate: step 1/3. In terms of biological role, catalyzes the dehydration of D-galactonate to 2-keto-3-deoxy-D-galactonate. The protein is D-galactonate dehydratase of Ralstonia pickettii (strain 12J).